Here is a 132-residue protein sequence, read N- to C-terminus: Agouti-signaling protein (132 aa).

Positions 1 to 22 (MDVTRLLLATLLVFLCFFTAYS) are cleaved as a signal peptide. N-linked (GlcNAc...) asparagine glycosylation is present at N39. The interval 60-88 (KQISRKEAEKKRSSKKEASMKKVARPRTP) is disordered. Over residues 63-79 (SRKEAEKKRSSKKEASM) the composition is skewed to basic and acidic residues. 5 cysteine pairs are disulfide-bonded: C93–C108, C100–C114, C107–C125, C111–C132, and C116–C123. Positions 93–132 (CVATRDSCKPPAPACCDPCASCQCRFFRSACSCRVLSLNC) constitute an Agouti domain.

It localises to the secreted. Involved in the regulation of melanogenesis. The binding of ASP to MC1R precludes alpha-MSH initiated signaling and thus blocks production of cAMP, leading to a down-regulation of eumelanogenesis (brown/black pigment) and thus increasing synthesis of pheomelanin (yellow/red pigment). The chain is Agouti-signaling protein (ASIP) from Macaca cyclopis (Taiwan macaque).